The primary structure comprises 485 residues: Phenylalanine--tRNA ligase alpha subunit, cytoplasmic (485 aa).

L-phenylalanine-binding positions include threonine 318, 360–362, and tyrosine 400; that span reads QIE. Residue glutamate 402 coordinates Mg(2+). Phenylalanine 426 lines the L-phenylalanine pocket.

Belongs to the class-II aminoacyl-tRNA synthetase family. Phe-tRNA synthetase alpha subunit type 2 subfamily. In terms of assembly, tetramer of two alpha and two beta subunits. Requires Mg(2+) as cofactor.

The protein resides in the cytoplasm. The protein localises to the cytosol. The catalysed reaction is tRNA(Phe) + L-phenylalanine + ATP = L-phenylalanyl-tRNA(Phe) + AMP + diphosphate + H(+). The polypeptide is Phenylalanine--tRNA ligase alpha subunit, cytoplasmic (Arabidopsis thaliana (Mouse-ear cress)).